A 775-amino-acid chain; its full sequence is Glutamine--tRNA ligase (775 aa).

Ala-2 is subject to N-acetylalanine. Ser-70 is subject to Phosphoserine. ATP is bound by residues Glu-271–Asn-273 and His-277–Ala-283. Asp-303 provides a ligand contact to L-glutamine. An N6-acetyllysine modification is found at Lys-309. Tyr-438 serves as a coordination point for L-glutamine. Residues Thr-457, Arg-486–Leu-487, and Val-494–Lys-496 each bind ATP. Ser-495 carries the phosphoserine modification.

Belongs to the class-I aminoacyl-tRNA synthetase family. As to quaternary structure, monomer. Part of a multisubunit complex that groups tRNA ligases for Arg (RARS1), Asp (DARS1), Gln (QARS1), Ile (IARS1), Leu (LARS1), Lys (KARS1), Met (MARS1) the bifunctional ligase for Glu and Pro (EPRS1) and the auxiliary subunits AIMP1/p43, AIMP2/p38 and EEF1E1/p18. Interacts with RARS1. Part of a complex composed of RARS1, QARS1 and AIMP1. Detected in dorsal root ganglia (at protein level). Detected in dorsal root ganglia.

It is found in the cytoplasm. The protein resides in the cytosol. The enzyme catalyses tRNA(Gln) + L-glutamine + ATP = L-glutaminyl-tRNA(Gln) + AMP + diphosphate. Glutamine--tRNA ligase. Plays a critical role in brain development. This Rattus norvegicus (Rat) protein is Glutamine--tRNA ligase (Qars1).